The sequence spans 533 residues: (E)-beta-farnesene synthase (533 aa).

Mg(2+) is bound by residues D286, D290, N430, S434, and E438. Residues 286-290 carry the DDXXD motif motif; the sequence is DDMMD.

The protein belongs to the terpene synthase family. The cofactor is Mg(2+). Requires Co(2+) as cofactor. Mn(2+) is required as a cofactor.

It is found in the cytoplasm. It catalyses the reaction (2E,6E)-farnesyl diphosphate = (E)-beta-farnesene + diphosphate. The protein operates within secondary metabolite biosynthesis; terpenoid biosynthesis. Its function is as follows. Sesquiterpene cyclase catalyzing the production of sixfold more beta-farnesene than alpha-bergamotene from farnesyl diphosphate. Involved in indirect defense by producing volatile signals attracting natural enemies of herbivores. The sequence is that of (E)-beta-farnesene synthase from Zea diploperennis (Diploperennial teosinte).